A 421-amino-acid polypeptide reads, in one-letter code: GTPase Obg (421 aa).

An Obg domain is found at 4 to 161 (LHFIDEAFNE…FKIKIQLKVL (158 aa)). The OBG-type G domain maps to 162-327 (ADVGLLGFPS…LKYAIKNLLQ (166 aa)). Residues 168–175 (GFPSVGKS), 193–197 (FTTLF), 214–217 (DLPG), 281–284 (NKMD), and 308–310 (SLI) each bind GTP. Residues Ser-175 and Thr-195 each coordinate Mg(2+). Residues 343–421 (DLNSETQTFT…ICNYLFDFVI (79 aa)) enclose the OCT domain.

Belongs to the TRAFAC class OBG-HflX-like GTPase superfamily. OBG GTPase family. Monomer. It depends on Mg(2+) as a cofactor.

The protein localises to the cytoplasm. In terms of biological role, an essential GTPase which binds GTP, GDP and possibly (p)ppGpp with moderate affinity, with high nucleotide exchange rates and a fairly low GTP hydrolysis rate. Plays a role in control of the cell cycle, stress response, ribosome biogenesis and in those bacteria that undergo differentiation, in morphogenesis control. In Phytoplasma australiense, this protein is GTPase Obg.